We begin with the raw amino-acid sequence, 549 residues long: Cation/acetate symporter ActP (549 aa).

A run of 13 helical transmembrane segments spans residues Ile-32–Lys-54, Gly-75–Thr-97, Gly-102–Leu-124, Ile-145–Gly-167, Val-182–Thr-204, Ala-211–Phe-233, Ala-263–Phe-285, Phe-298–Leu-320, Ala-361–Ser-383, Val-404–Phe-423, Ile-428–Ser-450, Leu-462–Val-484, and Tyr-494–Ile-516.

Belongs to the sodium:solute symporter (SSF) (TC 2.A.21) family.

It is found in the cell inner membrane. In terms of biological role, transports acetate. This chain is Cation/acetate symporter ActP, found in Photorhabdus laumondii subsp. laumondii (strain DSM 15139 / CIP 105565 / TT01) (Photorhabdus luminescens subsp. laumondii).